A 287-amino-acid chain; its full sequence is Large ribosomal subunit protein uL2 (287 aa).

Positions 221–287 (RGSVMNPCDH…SKRSRGGRDS (67 aa)) are disordered. The span at 258 to 287 (KTRKRNKPSNKFVLRKRRKTSKRSRGGRDS) shows a compositional bias: basic residues.

The protein belongs to the universal ribosomal protein uL2 family. In terms of assembly, part of the 50S ribosomal subunit. Forms a bridge to the 30S subunit in the 70S ribosome.

In terms of biological role, one of the primary rRNA binding proteins. Required for association of the 30S and 50S subunits to form the 70S ribosome, for tRNA binding and peptide bond formation. It has been suggested to have peptidyltransferase activity; this is somewhat controversial. Makes several contacts with the 16S rRNA in the 70S ribosome. This Synechococcus sp. (strain WH7803) protein is Large ribosomal subunit protein uL2.